The primary structure comprises 134 residues: Fluoride-specific ion channel FluC (134 aa).

4 helical membrane passes run 7-27 (LAVA…TIMA), 38-58 (GTLL…IVLV), 69-89 (LFLF…AAES), and 110-130 (VGSL…LLGH). Residues Gly77 and Thr80 each coordinate Na(+).

The protein belongs to the fluoride channel Fluc/FEX (TC 1.A.43) family.

It localises to the cell inner membrane. The catalysed reaction is fluoride(in) = fluoride(out). With respect to regulation, na(+) is not transported, but it plays an essential structural role and its presence is essential for fluoride channel function. Its function is as follows. Fluoride-specific ion channel. Important for reducing fluoride concentration in the cell, thus reducing its toxicity. The polypeptide is Fluoride-specific ion channel FluC (Legionella pneumophila (strain Lens)).